The sequence spans 288 residues: ATP synthase gamma chain (288 aa).

Belongs to the ATPase gamma chain family. As to quaternary structure, F-type ATPases have 2 components, CF(1) - the catalytic core - and CF(0) - the membrane proton channel. CF(1) has five subunits: alpha(3), beta(3), gamma(1), delta(1), epsilon(1). CF(0) has three main subunits: a, b and c.

The protein resides in the cell inner membrane. In terms of biological role, produces ATP from ADP in the presence of a proton gradient across the membrane. The gamma chain is believed to be important in regulating ATPase activity and the flow of protons through the CF(0) complex. The polypeptide is ATP synthase gamma chain (Polaromonas naphthalenivorans (strain CJ2)).